Reading from the N-terminus, the 245-residue chain is Ribonuclease 3 (245 aa).

The RNase III domain occupies 18-146 (LSEFLENLSI…FVGAIYLDSG (129 aa)). Glutamate 59 lines the Mg(2+) pocket. Aspartate 63 is an active-site residue. Residues aspartate 132 and glutamate 135 each contribute to the Mg(2+) site. The active site involves glutamate 135. A DRBM domain is found at 173–242 (DYKSLLQEYV…AEVALKAMED (70 aa)).

This sequence belongs to the ribonuclease III family. Homodimer. Mg(2+) is required as a cofactor.

It is found in the cytoplasm. It carries out the reaction Endonucleolytic cleavage to 5'-phosphomonoester.. Its function is as follows. Digests double-stranded RNA. Involved in the processing of primary rRNA transcript to yield the immediate precursors to the large and small rRNAs (23S and 16S). Processes some mRNAs, and tRNAs when they are encoded in the rRNA operon. Processes pre-crRNA and tracrRNA of type II CRISPR loci if present in the organism. The polypeptide is Ribonuclease 3 (Borreliella afzelii (strain PKo) (Borrelia afzelii)).